Here is a 112-residue protein sequence, read N- to C-terminus: Probable insulin-like peptide beta-type 5 (112 aa).

The N-terminal stretch at 1–19 (MNSVFTIIFVLCALQVAAS) is a signal peptide. The propeptide at 20 to 58 (FRQSFGPSMSEESASMQLLRELQHNMMESAHRPMPRARR) is removed; by convertase egl-3. 4 cysteine pairs are disulfide-bonded: Cys-68-Cys-97, Cys-80-Cys-110, Cys-84-Cys-111, and Cys-96-Cys-101.

The protein belongs to the insulin family. Post-translationally, may be processed by serine endoprotease bli-4. Expressed by ASI and ASJ sensory neurons.

The protein localises to the secreted. Probable insulin-like peptide which negatively regulates synapse development at the neuromuscular junctions. Probably acts as a daf-2/InsR agonist ligand to prevent dauer formation under optimal environmental conditions. Acts on AWC sensory neurons to regulate high salt chemotaxis responses. In Caenorhabditis elegans, this protein is Probable insulin-like peptide beta-type 5 (ins-6).